A 573-amino-acid chain; its full sequence is MRYSQYFIPTVKETPSDAEVISHKLMLRAGMIRKLAAGIYNYLPFGLRSIRKVEAIVREEMNRAGAIELLMPAVQPAELWKESGRWEFYGKELLRFNDRKDAEFCMGPTHEEVITDLIRKEVRSYRQLPINLYQIQGKFRDEIRPRFGLMRGREFIMKDAYSFDVNEAGADVSYEKMYKAYRRIFERCGLKFRAVEADTGTIGGSYSHEFMVLADSGEDAIVSCSACEYAANMEKAETRKGEGIEHADPRPMEHVSTPGQKSIEDVATFLGVQNTQVVKTLVLVADGEPVVALIRGDYDLNEIKLKNHLGCAELEMAEDDVVVKVTGAPTGYAGPVGLAAKVKVVADLSLEGMHNFVTGANAADTHLKNVNIGRDFSVSGFVDIRNVVIGDACPRCDSGKLEIWRGIEVGHVFKLGTKYSKALKATFLDADGKEQIIFMGCYGIGVGRTVAACIEQNHDENGIIFPIPIAPFQCIISSLSAKEDEVKAASESIYQELLEAGIEVLLDDRDERPGFKFKDADLIGIPLRIVVGAKALAEGKVELKERRSGEVEVLPIAEAIAKVKAAVKEALQV.

It belongs to the class-II aminoacyl-tRNA synthetase family. ProS type 1 subfamily. Homodimer.

The protein resides in the cytoplasm. The enzyme catalyses tRNA(Pro) + L-proline + ATP = L-prolyl-tRNA(Pro) + AMP + diphosphate. Its function is as follows. Catalyzes the attachment of proline to tRNA(Pro) in a two-step reaction: proline is first activated by ATP to form Pro-AMP and then transferred to the acceptor end of tRNA(Pro). As ProRS can inadvertently accommodate and process non-cognate amino acids such as alanine and cysteine, to avoid such errors it has two additional distinct editing activities against alanine. One activity is designated as 'pretransfer' editing and involves the tRNA(Pro)-independent hydrolysis of activated Ala-AMP. The other activity is designated 'posttransfer' editing and involves deacylation of mischarged Ala-tRNA(Pro). The misacylated Cys-tRNA(Pro) is not edited by ProRS. This Citrifermentans bemidjiense (strain ATCC BAA-1014 / DSM 16622 / JCM 12645 / Bem) (Geobacter bemidjiensis) protein is Proline--tRNA ligase.